The sequence spans 245 residues: Large ribosomal subunit protein uL4 (245 aa).

Polar residues predominate over residues Met-1–Ala-13. Disordered stretches follow at residues Met-1 to Ser-28, Ala-56 to Pro-114, and Thr-224 to Lys-245. The span at Gly-59 to Gly-71 shows a compositional bias: basic and acidic residues. Over residues Gly-72–Gly-83 the composition is skewed to basic residues.

It belongs to the universal ribosomal protein uL4 family. As to quaternary structure, part of the 50S ribosomal subunit.

Its function is as follows. One of the primary rRNA binding proteins, this protein initially binds near the 5'-end of the 23S rRNA. It is important during the early stages of 50S assembly. It makes multiple contacts with different domains of the 23S rRNA in the assembled 50S subunit and ribosome. Forms part of the polypeptide exit tunnel. The sequence is that of Large ribosomal subunit protein uL4 from Frankia casuarinae (strain DSM 45818 / CECT 9043 / HFP020203 / CcI3).